We begin with the raw amino-acid sequence, 1706 residues long: Cadherin-99C (1706 aa).

The signal sequence occupies residues 1-28 (MAARNSLTPQQGLGFFGLLILLCSAVLG). The Extracellular portion of the chain corresponds to 29–1395 (KSQMCEVETG…AIDNEVFPFT (1367 aa)). 11 Cadherin domains span residues 68 to 142 (DPDT…APRF), 143 to 264 (MNTP…DPSF), 277 to 387 (INPE…PPVI), 388 to 500 (SSSQ…APKL), 519 to 604 (VTQV…PPRF), 605 to 704 (QKPI…NPEF), 707 to 807 (STLP…VPKF), 808 to 908 (SDAR…PPRF), 909 to 1005 (ITVP…RVDV), 1038 to 1148 (SDDS…APEF), and 1156 to 1270 (QQDT…ALSF). N-linked (GlcNAc...) asparagine glycosylation is found at Asn-105 and Asn-188. Asn-442, Asn-553, Asn-620, and Asn-753 each carry an N-linked (GlcNAc...) asparagine glycan. N-linked (GlcNAc...) asparagine glycans are attached at residues Asn-1053, Asn-1088, and Asn-1108. Residues Asn-1311 and Asn-1367 are each glycosylated (N-linked (GlcNAc...) asparagine). Residues 1396 to 1416 (LIAISLVILILGTIGIIYICI) traverse the membrane as a helical segment. Residues 1417 to 1706 (SWSKYKNFKQ…RSEVETTTEL (290 aa)) are Cytoplasmic-facing.

In terms of assembly, interacts (via the cytoplasmic domain) with ck. Interacts (via the cytoplasmic domain) with Cul1 and Ubr3.

It localises to the apical cell membrane. The protein resides in the endosome membrane. It is found in the cell projection. The protein localises to the microvillus membrane. Functionally, cadherin that functions in epithelial morphogenesis and the intestine epithelial immune response. Essential for female fertility. Regulates the length and organization of apical microvilli in developing follicle cells and salivary glands. Function in the follicle cell is essential for egg development as the microvilli secrete eggshell material such as the vitelline membrane. Acts at least in part by regulating the recruitment of the myosin ck to the follicle cell microvilli. Also required to regulate cell rearrangements during salivary tube elongation, possibly by modulating cellular adhesion between the apical surface and apical extracellular matrix during epithelial tube elongation. May also function in cellular adhesion during the development of other tubular epithelia such as the trachea. Possibly functions as an apical membrane determinant which acts in apical membrane expansion during salivary and tracheal epithelial tube elongation. In salivary gland development, this function is independent of the other apical membrane determinants crb and sas. Essential downstream component of a hh-signaling pathway which regulates the Duox-dependent gut epithelial immune response to bacterial uracil; required for endosome formation in the enterocyte and activating norpA-dependent Ca2+ mobilization, which are essential steps in the Duox-dependent production of reactive oxygen species (ROS) in response to intestinal bacterial infection. This chain is Cadherin-99C, found in Drosophila melanogaster (Fruit fly).